We begin with the raw amino-acid sequence, 202 residues long: MDFVNNDTRQIAKNLLGVKVIYQDTTQTYTGYIVETEAYLGLNDRAAHGYGGKITPKVTSLYKRGGTIYAHVMHTHLLINFVTKSEGIPEGVLIRAIEPEDGLSAMFRNRGKKGYEVTNGPGKWTKAFNIPRAIDGATLNDCRLSIDTKNRKYPKDIIASPRIGIPNKGDWTHKSLRYTVKGNPFVSRMRKSDCMFPEDTWK.

This sequence belongs to the DNA glycosylase MPG family.

The sequence is that of Putative 3-methyladenine DNA glycosylase from Staphylococcus aureus (strain bovine RF122 / ET3-1).